The following is a 299-amino-acid chain: tRNA uridine(34) hydroxylase (299 aa).

The Rhodanese domain maps to 132 to 226 (AGRPVVMLDT…YFEEVGGAHY (95 aa)). C186 acts as the Cysteine persulfide intermediate in catalysis.

It belongs to the TrhO family.

It carries out the reaction uridine(34) in tRNA + AH2 + O2 = 5-hydroxyuridine(34) in tRNA + A + H2O. Its function is as follows. Catalyzes oxygen-dependent 5-hydroxyuridine (ho5U) modification at position 34 in tRNAs. This Burkholderia mallei (strain NCTC 10247) protein is tRNA uridine(34) hydroxylase.